The primary structure comprises 102 residues: Large ribosomal subunit protein bL21 (102 aa).

Belongs to the bacterial ribosomal protein bL21 family. As to quaternary structure, part of the 50S ribosomal subunit. Contacts protein L20.

Its function is as follows. This protein binds to 23S rRNA in the presence of protein L20. This is Large ribosomal subunit protein bL21 from Saccharopolyspora erythraea (strain ATCC 11635 / DSM 40517 / JCM 4748 / NBRC 13426 / NCIMB 8594 / NRRL 2338).